The chain runs to 473 residues: Aspartyl/glutamyl-tRNA(Asn/Gln) amidotransferase subunit B (473 aa).

The protein belongs to the GatB/GatE family. GatB subfamily. As to quaternary structure, heterotrimer of A, B and C subunits.

It catalyses the reaction L-glutamyl-tRNA(Gln) + L-glutamine + ATP + H2O = L-glutaminyl-tRNA(Gln) + L-glutamate + ADP + phosphate + H(+). The enzyme catalyses L-aspartyl-tRNA(Asn) + L-glutamine + ATP + H2O = L-asparaginyl-tRNA(Asn) + L-glutamate + ADP + phosphate + 2 H(+). Its function is as follows. Allows the formation of correctly charged Asn-tRNA(Asn) or Gln-tRNA(Gln) through the transamidation of misacylated Asp-tRNA(Asn) or Glu-tRNA(Gln) in organisms which lack either or both of asparaginyl-tRNA or glutaminyl-tRNA synthetases. The reaction takes place in the presence of glutamine and ATP through an activated phospho-Asp-tRNA(Asn) or phospho-Glu-tRNA(Gln). This chain is Aspartyl/glutamyl-tRNA(Asn/Gln) amidotransferase subunit B, found in Francisella tularensis subsp. mediasiatica (strain FSC147).